The sequence spans 243 residues: Venom nerve growth factor 1 (243 aa).

Positions 1–18 (MSMLCYTLIIAFLIGIWA) are cleaved as a signal peptide. A propeptide spanning residues 19–125 (APKSEDNVPL…TLNRNIRAKR (107 aa)) is cleaved from the precursor. Residues 47–66 (GLKTSRNTDQRHPAPKKAED) are compositionally biased toward basic and acidic residues. The segment at 47–69 (GLKTSRNTDQRHPAPKKAEDQEL) is disordered. Intrachain disulfides connect cysteine 139-cysteine 204, cysteine 182-cysteine 232, and cysteine 192-cysteine 234. N-linked (GlcNAc...) asparagine glycosylation occurs at asparagine 148.

It belongs to the NGF-beta family. As to quaternary structure, homodimer; non-covalently linked. Expressed by the venom gland.

The protein localises to the secreted. Its function is as follows. Nerve growth factor is important for the development and maintenance of the sympathetic and sensory nervous systems. It stimulates division and differentiation of sympathetic and embryonic sensory neurons as well as basal forebrain cholinergic neurons in the brain. Its relevance in the snake venom is not clear. However, it has been shown to inhibit metalloproteinase-dependent proteolysis of platelet glycoprotein Ib alpha, suggesting a metalloproteinase inhibition to prevent metalloprotease autodigestion and/or protection against prey proteases. Binds a lipid between the two protein chains in the homodimer. The lipid-bound form promotes histamine relase from mouse mast cells, contrary to the lipid-free form. This chain is Venom nerve growth factor 1, found in Pseudonaja textilis (Eastern brown snake).